The sequence spans 444 residues: MGPGIQPTSARPCSRTKHSRFALLAAALTARRVKQFTKQFRSRRMAEDILKLWQRQYHLPREDSDKRTLRERVHLYRPPRSDLGGIAVAVTVIALWATLFVYGLWFVKLPWALKVGETATSWATIAAVFFSLEFLYTGLFITTHDAMHGTIALRNRRLNDFLGQLAISLYAWFDYSVLHRKHWEHHNHTGEPRVDPDFHRGNPNLAVWFAQFMVSYMTLSQFLKIAVWSNLLLLAGAPLANQLLFMTAAPILSAFRLFYYGTYVPHHPEKGHTGAMPWQVSRTSSASRLQSFLTCYHFDLHWEHHRWPYAPWWELPKCRQIARGAALAPGPLPVPAAAAATAATAAAAAAATGSPAPASRAGSASSASAAASGFGSGHSGSVAAQPLSSLPLLSEGVKGLVEGAMELVAGGSSSGGGGEGGKPGAGEHGLLQRQRQLAPVGVMA.

Residues 408–444 (VAGGSSSGGGGEGGKPGAGEHGLLQRQRQLAPVGVMA) are disordered. Gly residues predominate over residues 412 to 427 (SSSGGGGEGGKPGAGE).

It catalyses the reaction all-trans-adonixanthin + 2 AH2 + 2 O2 = all-trans-(3S,3'S)-astaxanthin + 2 A + 3 H2O. It carries out the reaction all-trans-zeaxanthin + 2 AH2 + 2 O2 = all-trans-adonixanthin + 2 A + 3 H2O. The enzyme catalyses echinenone + 2 AH2 + 2 O2 = canthaxanthin + 2 A + 3 H2O. The catalysed reaction is all-trans-beta-carotene + 2 AH2 + 2 O2 = echinenone + 2 A + 3 H2O. It participates in carotenoid biosynthesis; astaxanthin biosynthesis. Involved in the biosynthesis of ketocarotenoids which are powerful anti-oxidative molecules. Catalyzes the conversion of zeaxanthin to astaxanthin via adonixanthin. Catalyzes the conversion of beta-carotene to canthaxanthin via echinenone. The chain is Zeaxanthin 4-ketolase from Chlamydomonas reinhardtii (Chlamydomonas smithii).